The primary structure comprises 340 residues: Undecaprenyl-phosphate 4-deoxy-4-formamido-L-arabinose transferase (340 aa).

The next 2 helical transmembrane spans lie at 235-255 and 269-289; these read LSIVGFAMAGLGVLFAAALIF and LFVLFAVLFVFTGGQFIGMGL.

Belongs to the glycosyltransferase 2 family.

The protein localises to the cell inner membrane. The catalysed reaction is UDP-4-deoxy-4-formamido-beta-L-arabinose + di-trans,octa-cis-undecaprenyl phosphate = 4-deoxy-4-formamido-alpha-L-arabinopyranosyl di-trans,octa-cis-undecaprenyl phosphate + UDP. The protein operates within glycolipid biosynthesis; 4-amino-4-deoxy-alpha-L-arabinose undecaprenyl phosphate biosynthesis; 4-amino-4-deoxy-alpha-L-arabinose undecaprenyl phosphate from UDP-4-deoxy-4-formamido-beta-L-arabinose and undecaprenyl phosphate: step 1/2. Its pathway is bacterial outer membrane biogenesis; lipopolysaccharide biosynthesis. Functionally, catalyzes the transfer of 4-deoxy-4-formamido-L-arabinose from UDP to undecaprenyl phosphate. The modified arabinose is attached to lipid A and is required for resistance to polymyxin and cationic antimicrobial peptides. The protein is Undecaprenyl-phosphate 4-deoxy-4-formamido-L-arabinose transferase of Pseudomonas fluorescens (strain Pf0-1).